A 1180-amino-acid chain; its full sequence is Phosphatidylinositol 4-kinase (1180 aa).

The PIK helical domain occupies 1–206 (MNKISDTIII…SVYLHSPSTS (206 aa)). 5 disordered regions span residues 15–84 (NEDE…KHKE), 257–327 (ENDH…ENDN), 355–391 (TSPI…NNIN), 768–799 (TISN…IPHS), and 832–894 (AISP…SPFG). The segment covering 38 to 74 (NNNNNNILTNVNNNKNNTITSSGGSDSSSSSSNNNNN) has biased composition (low complexity). Basic residues predominate over residues 75–84 (KIKKSKKHKE). A compositionally biased stretch (basic and acidic residues) spans 257 to 270 (ENDHHIENDPKKDI). 4 stretches are compositionally biased toward low complexity: residues 271–325 (NSNN…SGEN), 364–391 (NNNN…NNIN), 768–793 (TISN…PTLP), and 835–879 (PPSQ…SPTN). The PI3K/PI4K catalytic domain occupies 895-1164 (ESWQEKIERY…LISYSIDHFK (270 aa)). The segment at 901 to 907 (IERYKKI) is G-loop. The interval 1030-1038 (QIKDRHNGN) is catalytic loop. The tract at residues 1049-1073 (HIDFGFILSNSPGNISFESAPFKLT) is activation loop.

It belongs to the PI3/PI4-kinase family. Type III PI4K subfamily.

The catalysed reaction is a 1,2-diacyl-sn-glycero-3-phospho-(1D-myo-inositol) + ATP = a 1,2-diacyl-sn-glycero-3-phospho-(1D-myo-inositol 4-phosphate) + ADP + H(+). In terms of biological role, acts on phosphatidylinositol (PtdIns) in the first committed step in the production of the second messenger inositol-1,4,5,-trisphosphate. This Dictyostelium discoideum (Social amoeba) protein is Phosphatidylinositol 4-kinase (pikD).